The chain runs to 690 residues: Amino-acid acetyltransferase, mitochondrial (690 aa).

The interval 62 to 93 is disordered; the sequence is RFPSVKKPKPPIPRQNQGAVETQSGKENEKPG. Residues 75-84 are compositionally biased toward polar residues; it reads RQNQGAVETQ. One can recognise an N-acetyltransferase domain in the interval 508–679; sequence DGHHLTLDDP…DYEAVCRSIQ (172 aa).

The protein belongs to the acetyltransferase family.

Its subcellular location is the mitochondrion. The catalysed reaction is L-glutamate + acetyl-CoA = N-acetyl-L-glutamate + CoA + H(+). It functions in the pathway amino-acid biosynthesis; L-arginine biosynthesis; N(2)-acetyl-L-ornithine from L-glutamate: step 1/4. Functionally, N-acetylglutamate synthase involved in arginine biosynthesis. The polypeptide is Amino-acid acetyltransferase, mitochondrial (arg2) (Talaromyces stipitatus (strain ATCC 10500 / CBS 375.48 / QM 6759 / NRRL 1006) (Penicillium stipitatum)).